The following is a 261-amino-acid chain: Class II histocompatibility antigen, M beta 1 chain (261 aa).

Residues 1 to 18 (MAALWLLLLVLSLHCMGA) form the signal peptide. The beta-1 stretch occupies residues 19 to 112 (GGFVAHVEST…PFWNALTHRT (94 aa)). Over 19 to 218 (GGFVAHVEST…PGLSPIQTVK (200 aa)) the chain is Lumenal. 3 cysteine pairs are disulfide-bonded: Cys29-Cys97, Cys43-Cys53, and Cys135-Cys192. Asn75 carries an N-linked (GlcNAc...) asparagine glycan. The interval 113–207 (RPPSVRVAQT…GTSEPIRGDW (95 aa)) is beta-2. The 91-residue stretch at 114–204 (PPSVRVAQTT…QHSGTSEPIR (91 aa)) folds into the Ig-like C1-type domain. Residues 208–218 (TPGLSPIQTVK) are connecting peptide. A helical transmembrane segment spans residues 219 to 239 (VSVSAATLGLGFIIFCVGFFR). Residues 240 to 261 (WRKSHSSSYTPLSGSTYPEGRH) lie on the Cytoplasmic side of the membrane. Residues 248 to 251 (YTPL) carry the YXXZ motif motif.

Belongs to the MHC class II family. As to quaternary structure, heterodimer of an alpha chain (DMA) and a beta chain (DMB). Interacts with MHCII; this interaction mediates rapid selection of high-affinity peptides.

The protein resides in the late endosome membrane. It is found in the lysosome membrane. Its function is as follows. Plays a critical role in catalyzing the release of class II-associated invariant chain peptide (CLIP) from newly synthesized MHC class II molecules and freeing the peptide binding site for acquisition of antigenic peptides. In Mus musculus (Mouse), this protein is Class II histocompatibility antigen, M beta 1 chain (H2-DMb1).